The chain runs to 157 residues: Protein-export protein SecB (157 aa).

Belongs to the SecB family. As to quaternary structure, homotetramer, a dimer of dimers. One homotetramer interacts with 1 SecA dimer.

It is found in the cytoplasm. Functionally, one of the proteins required for the normal export of preproteins out of the cell cytoplasm. It is a molecular chaperone that binds to a subset of precursor proteins, maintaining them in a translocation-competent state. It also specifically binds to its receptor SecA. The chain is Protein-export protein SecB from Shewanella frigidimarina (strain NCIMB 400).